The sequence spans 228 residues: Biosynthetic peptidoglycan transglycosylase (228 aa).

A helical membrane pass occupies residues 8 to 28 (GVAALLALFLLYQLWIFGHIV).

The protein belongs to the glycosyltransferase 51 family.

The protein resides in the cell inner membrane. It carries out the reaction [GlcNAc-(1-&gt;4)-Mur2Ac(oyl-L-Ala-gamma-D-Glu-L-Lys-D-Ala-D-Ala)](n)-di-trans,octa-cis-undecaprenyl diphosphate + beta-D-GlcNAc-(1-&gt;4)-Mur2Ac(oyl-L-Ala-gamma-D-Glu-L-Lys-D-Ala-D-Ala)-di-trans,octa-cis-undecaprenyl diphosphate = [GlcNAc-(1-&gt;4)-Mur2Ac(oyl-L-Ala-gamma-D-Glu-L-Lys-D-Ala-D-Ala)](n+1)-di-trans,octa-cis-undecaprenyl diphosphate + di-trans,octa-cis-undecaprenyl diphosphate + H(+). It functions in the pathway cell wall biogenesis; peptidoglycan biosynthesis. Functionally, peptidoglycan polymerase that catalyzes glycan chain elongation from lipid-linked precursors. The protein is Biosynthetic peptidoglycan transglycosylase of Laribacter hongkongensis (strain HLHK9).